The chain runs to 61 residues: MIKYAIIFAVISLIAGALGFSGVAAGAAGIAKVLFGLFLILAVIFIVLAALGVGAAKKMMK.

2 consecutive transmembrane segments (helical) span residues 5-25 (AIIFAVISLIAGALGFSGVAA) and 33-53 (VLFGLFLILAVIFIVLAALGV).

The protein belongs to the UPF0391 family.

The protein localises to the cell membrane. The polypeptide is UPF0391 membrane protein Pnap_0032 (Polaromonas naphthalenivorans (strain CJ2)).